Consider the following 352-residue polypeptide: Ion-translocating oxidoreductase complex subunit D (352 aa).

The next 5 membrane-spanning stretches (helical) occupy residues 20 to 40 (IMLL…WFFG), 42 to 62 (GTLV…ALVL), 78 to 109 (ALLT…VIIA), 123 to 143 (PAMI…TSWL), and 148 to 168 (IAVN…GHIT). The residue at position 187 (T187) is an FMN phosphoryl threonine. The next 5 helical transmembrane spans lie at 215–235 (LAGV…VWLL), 242–262 (WHIP…GWLF), 267–287 (LAAP…FFIL), 301–321 (LIFG…GGYP), and 322–342 (DGVA…DYYT).

This sequence belongs to the NqrB/RnfD family. In terms of assembly, the complex is composed of six subunits: RsxA, RsxB, RsxC, RsxD, RsxE and RsxG. It depends on FMN as a cofactor.

Its subcellular location is the cell inner membrane. Part of a membrane-bound complex that couples electron transfer with translocation of ions across the membrane. Required to maintain the reduced state of SoxR. This is Ion-translocating oxidoreductase complex subunit D from Escherichia coli (strain SMS-3-5 / SECEC).